The following is a 151-amino-acid chain: Secreted RxLR effector protein 30 (151 aa).

The first 19 residues, 1–19 (MRSSTILIVLGIAILAVNG), serve as a signal peptide directing secretion. Positions 38–53 (RLLRSTSTEHETDEER) match the RxLR-dEER motif.

It belongs to the RxLR effector family.

The protein resides in the secreted. It is found in the host nucleus. In terms of biological role, effector that acts as a broad suppressor of cell death to interrupt plant immunity. Inhibits cell death induced by cell death-inducing proteins, including the PAMP elicitor INF1 from P.infestans. The chain is Secreted RxLR effector protein 30 from Plasmopara viticola (Downy mildew of grapevine).